The chain runs to 74 residues: Small ribosomal subunit protein bS18 (74 aa).

Belongs to the bacterial ribosomal protein bS18 family. Part of the 30S ribosomal subunit. Forms a tight heterodimer with protein bS6.

In terms of biological role, binds as a heterodimer with protein bS6 to the central domain of the 16S rRNA, where it helps stabilize the platform of the 30S subunit. The polypeptide is Small ribosomal subunit protein bS18 (Thioalkalivibrio sulfidiphilus (strain HL-EbGR7)).